The primary structure comprises 400 residues: Lysophospholipid transporter LplT (400 aa).

12 consecutive transmembrane segments (helical) span residues 19-39 (VIVAQFLSAFGDNALLFATLA), 53-73 (VLQMVFVGAYILFAPFVGQIA), 91-111 (AGAAGICLGINPFVGYTLVGI), 139-159 (LMEASTIAAILLGSVAGGVLA), 164-184 (IAALVACALAYAGAVAANLFI), 195-213 (SWRLSAMTRSFFSACVVLW), 227-247 (LFWGAGVTLRFLLVLWVPVAL), 257-277 (YLNAMVAVGIVVGAGAAAKLV), 281-301 (TVSRCMPAGILIGVVVAIFSL), 304-324 (ALLPAYALLLLIGMLGGFFVV), 352-372 (NSAMLLMLGLYSLAVLVGVPA), and 373-393 (VAIGIGFGVLFALAIAALWIW).

Belongs to the major facilitator superfamily. LplT (TC 2.A.1.42) family.

It is found in the cell inner membrane. Catalyzes the facilitated diffusion of 2-acyl-glycero-3-phosphoethanolamine (2-acyl-GPE) into the cell. This chain is Lysophospholipid transporter LplT, found in Salmonella newport (strain SL254).